The chain runs to 383 residues: Aurachin C monooxygenase/isomerase (383 aa).

FAD is bound by residues G15, S47, V128, D285, and 295–299 (GQGGC).

Requires FAD as cofactor.

The catalysed reaction is aurachin C + NADH + O2 + H(+) = 4-hydroxy-2-methyl-3-oxo-4-[(2E,6E)-farnesyl]-3,4-dihydroquinoline 1-oxide + NAD(+) + H2O. It catalyses the reaction aurachin C + NADPH + O2 + H(+) = 4-hydroxy-2-methyl-3-oxo-4-[(2E,6E)-farnesyl]-3,4-dihydroquinoline 1-oxide + NADP(+) + H2O. The enzyme catalyses aurachin C + NADH + O2 + H(+) = aurachin C epoxide + NAD(+) + H2O. It carries out the reaction aurachin C + NADPH + O2 + H(+) = aurachin C epoxide + NADP(+) + H2O. The catalysed reaction is aurachin C epoxide = 2-hydroxy-1a-methyl-7a-[(2E,6E)-farnesyl]-1a,2-dihydrooxireno[2,3-b]quinolin-7(7aH)-one. It catalyses the reaction 2-hydroxy-1a-methyl-7a-[(2E,6E)-farnesyl]-1a,2-dihydrooxireno[2,3-b]quinolin-7(7aH)-one = 4-hydroxy-2-methyl-3-oxo-4-[(2E,6E)-farnesyl]-3,4-dihydroquinoline 1-oxide. Its function is as follows. Catalyzes the initial step in the conversion of aurachin C to aurachin B. Catalyzes the epoxidation of the C(2)-C(3) double bond of aurachin C, which is followed by a semipinacol rearrangement, causing migration of the farnesyl group from C(3) to C(4). Accepts both NADH and NADPH, but has a preference for NADH. This is Aurachin C monooxygenase/isomerase from Stigmatella aurantiaca.